A 338-amino-acid chain; its full sequence is Patr class I histocompatibility antigen, alpha chain G (338 aa).

Residues 1 to 24 (MVVMAPRTLFLLLSGALTLTETWA) form the signal peptide. An alpha-1 region spans residues 25-114 (GSHSMRYFSA…LRGYYNQSEA (90 aa)). The Extracellular segment spans residues 25–308 (GSHSMRYFSA…KQSSLPTIPI (284 aa)). Residue N110 is glycosylated (N-linked (GlcNAc...) asparagine). The interval 115–206 (SSHTLQWMIG…ENGKEMLQRA (92 aa)) is alpha-2. Disulfide bonds link C125/C188 and C227/C283. The alpha-3 stretch occupies residues 207 to 298 (DPPKTHVTHH…GLPEPLMLRW (92 aa)). Residues 209-299 (PKTHVTHHPV…LPEPLMLRWK (91 aa)) enclose the Ig-like C1-type domain. The interval 299–308 (KQSSLPTIPI) is connecting peptide. The chain crosses the membrane as a helical span at residues 309–332 (MGIVAGLVVLAAVVTGAAVAAVLW). Residues 333–338 (RKKSSD) lie on the Cytoplasmic side of the membrane.

It belongs to the MHC class I family. Heterodimer of an alpha chain and a beta chain (beta-2-microglobulin). Homodimer; disulfide-linked. Binds to LILRB1 and LILRB2.

The protein resides in the cell membrane. Functionally, involved in the presentation of foreign antigens to the immune system. The polypeptide is Patr class I histocompatibility antigen, alpha chain G (Patr-G) (Pan troglodytes (Chimpanzee)).